We begin with the raw amino-acid sequence, 274 residues long: NAD(P)H-quinone oxidoreductase subunit K, chloroplastic (274 aa).

Composition is skewed to polar residues over residues 1 to 10 (MVINQKNLSS) and 18 to 27 (SGSQSSTKAD). The tract at residues 1 to 27 (MVINQKNLSSPVAPYDKSGSQSSTKAD) is disordered. 4 residues coordinate [4Fe-4S] cluster: Cys90, Cys91, Cys155, and Cys186.

The protein belongs to the complex I 20 kDa subunit family. As to quaternary structure, NDH is composed of at least 16 different subunits, 5 of which are encoded in the nucleus. Requires [4Fe-4S] cluster as cofactor.

The protein resides in the plastid. The protein localises to the chloroplast thylakoid membrane. The enzyme catalyses a plastoquinone + NADH + (n+1) H(+)(in) = a plastoquinol + NAD(+) + n H(+)(out). It catalyses the reaction a plastoquinone + NADPH + (n+1) H(+)(in) = a plastoquinol + NADP(+) + n H(+)(out). NDH shuttles electrons from NAD(P)H:plastoquinone, via FMN and iron-sulfur (Fe-S) centers, to quinones in the photosynthetic chain and possibly in a chloroplast respiratory chain. The immediate electron acceptor for the enzyme in this species is believed to be plastoquinone. Couples the redox reaction to proton translocation, and thus conserves the redox energy in a proton gradient. The protein is NAD(P)H-quinone oxidoreductase subunit K, chloroplastic of Chlorokybus atmophyticus (Soil alga).